A 327-amino-acid polypeptide reads, in one-letter code: NADPH-dependent aldose reductase GRE3 (327 aa).

Catalysis depends on Tyr-49, which acts as the Proton donor. His-111 lines the substrate pocket. Residue 219-286 (SSFGPQSFIE…SSKKERLLGN (68 aa)) participates in NADP(+) binding.

The protein belongs to the aldo/keto reductase family. Monomer.

It localises to the cytoplasm. The protein localises to the nucleus. It catalyses the reaction an alditol + NAD(+) = an aldose + NADH + H(+). It carries out the reaction an alditol + NADP(+) = an aldose + NADPH + H(+). Its function is as follows. Aldose reductase with a broad substrate specificity. Reduces the cytotoxic compound methylglyoxal (MG) to acetol and (R)-lactaldehyde under stress conditions. MG is synthesized via a bypath of glycolysis from dihydroxyacetone phosphate and is believed to play a role in cell cycle regulation and stress adaptation. In pentose-fermenting yeasts, aldose reductase catalyzes the reduction of xylose into xylitol. The purified enzyme catalyzes this reaction, but the inability of S.cerevisiae to grow on xylose as sole carbon source indicates that the physiological function is more likely methylglyoxal reduction. This chain is NADPH-dependent aldose reductase GRE3, found in Saccharomyces cerevisiae (strain ATCC 204508 / S288c) (Baker's yeast).